The primary structure comprises 201 residues: Recombination protein RecR (201 aa).

Residues 57-72 (CKYCSNFGNKDECDIC) form a C4-type zinc finger. The Toprim domain maps to 80–176 (TKLMIVTTNE…QIYRIGFGIP (97 aa)).

It belongs to the RecR family.

In terms of biological role, may play a role in DNA repair. It seems to be involved in an RecBC-independent recombinational process of DNA repair. It may act with RecF and RecO. This chain is Recombination protein RecR, found in Ureaplasma urealyticum serovar 10 (strain ATCC 33699 / Western).